We begin with the raw amino-acid sequence, 43 residues long: YKRCHKKEGHCFPKTVICLPPSSDFGKMDCRWKWKCCKKGSVN.

3 cysteine pairs are disulfide-bonded: Cys-4–Cys-36, Cys-11–Cys-30, and Cys-18–Cys-37.

Belongs to the crotamine-myotoxin family. Monomer. In terms of tissue distribution, expressed by the venom gland.

The protein localises to the secreted. Its function is as follows. Cationic peptide that possesses multiple functions. It acts as a cell-penetrating peptide (CPP), and as a potent voltage-gated potassium channel (Kv) inhibitor. It exhibits antimicrobial activities, hind limb paralysis, and severe muscle necrosis by a non-enzymatic mechanism. This chain is Myotoxin-1, found in Crotalus concolor (Midget faded rattlesnake).